We begin with the raw amino-acid sequence, 426 residues long: Limonoid 21-O-acetyltransferse (426 aa).

Residues histidine 152 and aspartate 365 each act as proton acceptor in the active site.

The protein belongs to the plant acyltransferase family. As to quaternary structure, monomer. In terms of tissue distribution, expressed in maturing fruits and in juice vesicles.

The catalysed reaction is isomeliandiol + acetyl-CoA = 21-O-acetyl-isomeliandiol + CoA. It participates in secondary metabolite biosynthesis; terpenoid biosynthesis. Acetyltransferase involved in the biosynthesis of limonoids triterpene natural products such as limonin, a compound with insecticidal activity responsible for the bitter taste in citrus. Catalyzes the formation of 21-O-acetyl-isomeliandiol from isomeliandiol. This Citrus sinensis (Sweet orange) protein is Limonoid 21-O-acetyltransferse.